Here is a 217-residue protein sequence, read N- to C-terminus: Large ribosomal subunit protein bL25 (217 aa).

A disordered region spans residues 178–217 (VVAPTEEPTEEEIEAMEGEQQTEEPEVVGESKEDEEKTEE). Over residues 184 to 205 (EPTEEEIEAMEGEQQTEEPEVV) the composition is skewed to acidic residues. Residues 206–217 (GESKEDEEKTEE) show a composition bias toward basic and acidic residues.

It belongs to the bacterial ribosomal protein bL25 family. CTC subfamily. As to quaternary structure, part of the 50S ribosomal subunit; part of the 5S rRNA/L5/L18/L25 subcomplex. Contacts the 5S rRNA. Binds to the 5S rRNA independently of L5 and L18.

This is one of the proteins that binds to the 5S RNA in the ribosome where it forms part of the central protuberance. The chain is Large ribosomal subunit protein bL25 from Staphylococcus aureus (strain USA300).